The primary structure comprises 202 residues: Alpha-S1-casein (202 aa).

Disordered stretches follow at residues 1–25 (RPKL…VLKE) and 51–84 (LKEK…VVPI). 2 stretches are compositionally biased toward basic and acidic residues: residues 16 to 25 (QDSREKVLKE) and 51 to 63 (LKEK…KEYL). Position 18 is a phosphoserine (serine 18). A compositionally biased stretch (low complexity) spans 70 to 80 (QESSSTSSSEE). Serine 72, serine 73, serine 74, serine 76, serine 77, and serine 78 each carry phosphoserine.

This sequence belongs to the alpha-casein family. As to expression, mammary gland specific. Secreted in milk.

It localises to the secreted. Functionally, important role in the capacity of milk to transport calcium phosphate. The sequence is that of Alpha-S1-casein from Equus asinus (Donkey).